The sequence spans 963 residues: Non-ribosomal peptide synthetase CmlP (963 aa).

The region spanning 492 to 568 is the Carrier domain; it reads GEDAAELRRV…AAFLRHLRGE (77 aa). Ser526 is subject to O-(pantetheine 4'-phosphoryl)serine. A disordered region spans residues 928-963; the sequence is GRLLGTPPDTPAGDRPERTGTTAEAQNGAAHAPTPR.

Belongs to the ATP-dependent AMP-binding enzyme family. The cofactor is pantetheine 4'-phosphate.

The enzyme catalyses 4-amino-L-phenylalanine + holo-[peptidyl-carrier protein] + ATP = 4-amino-L-phenylalanyl-[peptidyl-carrier protein] + AMP + diphosphate. The protein operates within antibiotic biosynthesis. Its function is as follows. Involved in chloramphenicol biosynthesis. Activates 4-amino-L-phenylalanine by adenylation and loads it onto its peptidyl carrier domain, via a thioester linkage to the phosphopanthetheine moiety. Can also adenylate tyrosine and phenylalanine at low rates, but not L-p-nitrophenylalanine or threo-phenylserine. The sequence is that of Non-ribosomal peptide synthetase CmlP from Streptomyces venezuelae (strain ATCC 10712 / CBS 650.69 / DSM 40230 / JCM 4526 / NBRC 13096 / PD 04745).